A 973-amino-acid chain; its full sequence is Leucine--tRNA ligase, chloroplastic/mitochondrial (973 aa).

The 'HIGH' region signature appears at 126–135; sequence PSGAGLHVGH. The 'KMSKS' region signature appears at 730-734; sequence KMSKS. Lys-733 serves as a coordination point for ATP.

It belongs to the class-I aminoacyl-tRNA synthetase family.

The protein localises to the plastid. It localises to the chloroplast. Its subcellular location is the mitochondrion. It carries out the reaction tRNA(Leu) + L-leucine + ATP = L-leucyl-tRNA(Leu) + AMP + diphosphate. Functionally, catalyzes the specific attachment of an amino acid to its cognate tRNA in a two step reaction: the amino acid (AA) is first activated by ATP to form AA-AMP and then transferred to the acceptor end of the tRNA. This chain is Leucine--tRNA ligase, chloroplastic/mitochondrial, found in Arabidopsis thaliana (Mouse-ear cress).